A 482-amino-acid polypeptide reads, in one-letter code: Retinoic acid receptor beta (482 aa).

The modulating stretch occupies residues methionine 1 to proline 114. Serine 104 carries the phosphoserine modification. 2 NR C4-type zinc fingers span residues cysteine 115–cysteine 135 and cysteine 151–cysteine 175. Positions cysteine 115–methionine 180 form a DNA-binding region, nuclear receptor. The interval serine 181–alanine 209 is hinge. In terms of domain architecture, NR LBD spans glutamate 210–serine 444. Positions asparagine 443–glutamine 482 are disordered. Over residues serine 462–glutamine 482 the composition is skewed to low complexity.

The protein belongs to the nuclear hormone receptor family. NR1 subfamily. As to quaternary structure, homodimer. Heterodimer; with a RXR molecule. Binds DNA preferentially as a RAR/RXR heterodimer. Heterodimerizes (via NR LBD) with RXRA. Interacts weakly with NCOR2.

It localises to the nucleus. The protein resides in the cytoplasm. Its function is as follows. Receptor for retinoic acid. Retinoic acid receptors bind as heterodimers to their target response elements in response to their ligands, all-trans or 9-cis retinoic acid, and regulate gene expression in various biological processes. The RAR/RXR heterodimers bind to the retinoic acid response elements (RARE) composed of tandem 5'-AGGTCA-3' sites known as DR1-DR5. In the absence of ligand, acts mainly as an activator of gene expression due to weak binding to corepressors. The RXRA/RARB heterodimer can act as a repressor on the DR1 element and as an activator on the DR5 element. In concert with RARG, required for skeletal growth, matrix homeostasis and growth plate function. This is Retinoic acid receptor beta (Rarb) from Mus musculus (Mouse).